A 186-amino-acid chain; its full sequence is Ribosome rescue factor SmrB (186 aa).

2 stretches are compositionally biased toward basic and acidic residues: residues 1–16 (MSKNDHRITHNKSDKD) and 49–60 (KQKEIRRTEREA). Disordered regions lie at residues 1–20 (MSKNDHRITHNKSDKDNLDD) and 41–60 (LHAPNRNPKQKEIRRTEREA). The region spanning 107 to 182 (LDMHGMTQQE…GDGALLVLLS (76 aa)) is the Smr domain.

This sequence belongs to the SmrB family. In terms of assembly, associates with collided ribosomes, but not with correctly translating polysomes.

Functionally, acts as a ribosome collision sensor. Detects stalled/collided disomes (pairs of ribosomes where the leading ribosome is stalled and a second ribosome has collided with it) and endonucleolytically cleaves mRNA at the 5' boundary of the stalled ribosome. Stalled/collided disomes form a new interface (primarily via the 30S subunits) that binds SmrB. Cleaved mRNA becomes available for tmRNA ligation, leading to ribosomal subunit dissociation and rescue of stalled ribosomes. In Vibrio cholerae serotype O1 (strain ATCC 39541 / Classical Ogawa 395 / O395), this protein is Ribosome rescue factor SmrB.